The following is a 185-amino-acid chain: Ribosome-recycling factor (185 aa).

It belongs to the RRF family.

The protein localises to the cytoplasm. In terms of biological role, responsible for the release of ribosomes from messenger RNA at the termination of protein biosynthesis. May increase the efficiency of translation by recycling ribosomes from one round of translation to another. This Mycobacterium bovis (strain BCG / Pasteur 1173P2) protein is Ribosome-recycling factor.